The sequence spans 208 residues: Small ribosomal subunit protein eS8 (208 aa).

Residues 1–23 (MGISRDSAHKRRATGGKRKSLRK) form a disordered region. The segment covering 8 to 23 (AHKRRATGGKRKSLRK) has biased composition (basic residues).

It belongs to the eukaryotic ribosomal protein eS8 family. In terms of assembly, component of the small ribosomal subunit. Identified in a IGF2BP1-dependent mRNP granule complex containing untranslated mRNAs. Part of the small subunit (SSU) processome, composed of more than 70 proteins and the RNA chaperone small nucleolar RNA (snoRNA) U3.

Its subcellular location is the cytoplasm. It is found in the membrane. The protein localises to the nucleus. It localises to the nucleolus. Its function is as follows. Component of the small ribosomal subunit. The ribosome is a large ribonucleoprotein complex responsible for the synthesis of proteins in the cell. Part of the small subunit (SSU) processome, first precursor of the small eukaryotic ribosomal subunit. During the assembly of the SSU processome in the nucleolus, many ribosome biogenesis factors, an RNA chaperone and ribosomal proteins associate with the nascent pre-rRNA and work in concert to generate RNA folding, modifications, rearrangements and cleavage as well as targeted degradation of pre-ribosomal RNA by the RNA exosome. The chain is Small ribosomal subunit protein eS8 (RpS8) from Drosophila melanogaster (Fruit fly).